Consider the following 462-residue polypeptide: Chromosomal replication initiator protein DnaA (462 aa).

Residues 1 to 84 (MAVSLWQQCI…RFDIGSRPSA (84 aa)) form a domain I, interacts with DnaA modulators region. The tract at residues 84–125 (APRPVQATAAVERPKFEQNTKPAKTSFNVNSPEPAMAANHRS) is domain II. The tract at residues 126 to 342 (NINRTYQFEN…GALNRVIANA (217 aa)) is domain III, AAA+ region. ATP is bound by residues Gly170, Gly172, Lys173, and Thr174. Positions 343 to 462 (NFTGRPITID…YANLIRTLSS (120 aa)) are domain IV, binds dsDNA.

It belongs to the DnaA family. Oligomerizes as a right-handed, spiral filament on DNA at oriC.

It is found in the cytoplasm. Functionally, plays an essential role in the initiation and regulation of chromosomal replication. ATP-DnaA binds to the origin of replication (oriC) to initiate formation of the DNA replication initiation complex once per cell cycle. Binds the DnaA box (a 9 base pair repeat at the origin) and separates the double-stranded (ds)DNA. Forms a right-handed helical filament on oriC DNA; dsDNA binds to the exterior of the filament while single-stranded (ss)DNA is stabiized in the filament's interior. The ATP-DnaA-oriC complex binds and stabilizes one strand of the AT-rich DNA unwinding element (DUE), permitting loading of DNA polymerase. After initiation quickly degrades to an ADP-DnaA complex that is not apt for DNA replication. Binds acidic phospholipids. The polypeptide is Chromosomal replication initiator protein DnaA (Shewanella sediminis (strain HAW-EB3)).